The chain runs to 1013 residues: Polyprotein of EF-Ts, chloroplastic (1013 aa).

Residues Met-1–Phe-43 constitute a chloroplast transit peptide. The region spanning Gly-64–Lys-133 is the S1 motif 1 domain. Residues Ser-141–Thr-150 show a composition bias toward acidic residues. The interval Ser-141–Asp-163 is disordered. The region spanning Met-227–Phe-331 is the S1 motif 2 domain. Residues Gln-772–Val-798 form a disordered region. Basic and acidic residues predominate over residues Pro-781–Lys-793.

The protein belongs to the EF-Ts family. As to quaternary structure, component of the chloroplast ribosome 30S and 70S subunits, as well as polysomes. Component of the chloroplast ribosome 70S subunit, and at low levels, present in polysomes. In terms of assembly, associates transiently with chloroplast polysomes.

The protein localises to the plastid. The protein resides in the chloroplast. Its function is as follows. Associates with the EF-Tu.GDP complex and induces the exchange of GDP to GTP. It remains bound to the aminoacyl-tRNA.EF-Tu.GTP complex up to the GTP hydrolysis stage on the ribosome. Binds to psbD and psbA mRNAs 5'-untranslated regions (UTRs) in vitro. The chain is Polyprotein of EF-Ts, chloroplastic from Chlamydomonas reinhardtii (Chlamydomonas smithii).